The primary structure comprises 515 residues: MTNFSSLLTTIFLCIISSATGSGTIELLISSPQTVLVEPTVCANFECAAPDDLSLARKVQRRVPLRFGTGQYHGEARERIDLHLKIIEPTSNEILALQHHRPAADTEWNSDAPIVIETSRGFNVTVQLRNLCSSNYHGKRCNRYCIANAKLHWECSTHGVRRCSAGWSGEDCSNPICAGGCSNRGRCVAPNQCSCADGFNGTRCEQCLPRAGCVNGDCVNETPNTCKCRDGFIGDRCDIDIKICSLEKPCANGGICSIDSSSSTGYKCHCPFEFVGSQCKTPLSKVRCSAEHVCKNGGACISMDDTNIQCKCRRGFSGKFCEIGNHGDCSAMRCSAGETCQISGDFAICVENDELLLTTNKPAETTKSVEKWREPRKTANDEQASDELQLRLIAAICVLFSVCVIGLALVSFFFYMHSFSKWKHPSSQQAGGSTILPTTTSIPMSTTSSGTGSPVYKVCIIDSEHRGNAPGSSSDSEPDHHCPPPHRHSPPPAYSSLVLYKKVPMAADDESSFRV.

Positions methionine 1–glutamate 26 are cleaved as a signal peptide. The Extracellular portion of the chain corresponds to leucine 27–leucine 392. A glycan (N-linked (GlcNAc...) asparagine) is linked at asparagine 123. The region spanning asparagine 130 to cysteine 172 is the DSL domain. 14 cysteine pairs are disulfide-bonded: cysteine 132–cysteine 141, cysteine 145–cysteine 155, cysteine 163–cysteine 172, cysteine 177–cysteine 187, cysteine 181–cysteine 193, cysteine 195–cysteine 204, cysteine 213–cysteine 218, cysteine 228–cysteine 237, cysteine 244–cysteine 256, cysteine 250–cysteine 268, cysteine 270–cysteine 279, cysteine 288–cysteine 300, cysteine 294–cysteine 310, and cysteine 312–cysteine 321. 4 EGF-like domains span residues serine 173–glutamate 205, arginine 203–aspartate 238, aspartate 240–lysine 280, and serine 284–glutamate 322. An N-linked (GlcNAc...) asparagine glycan is attached at asparagine 200. The EGF-like 5; incomplete domain maps to asparagine 325–cysteine 349. Residues isoleucine 393–phenylalanine 413 traverse the membrane as a helical segment. Over phenylalanine 414 to valine 515 the chain is Cytoplasmic. Disordered regions lie at residues serine 427–glycine 452 and arginine 466–tyrosine 494. Residues glycine 431–glycine 452 are compositionally biased toward low complexity.

The protein localises to the cell membrane. It is found in the nucleus. The protein resides in the cytoplasm. In terms of biological role, probable ligand for lin-12/Notch and glp-1/Notch receptors and involved in the mediation of Notch signaling. Involved in the lin-12/Notch pathway signaling of cell fate in vulval precursor cells (VPCs), acting redundantly with dsl-1 and lag-2. Contributes to the establishment of the dorsal-ventral axis in early embryos. Involved in the specification of the blastomere cell ABp fate, probably acting as a signal from the P2 blastomere to the glp-1/Notch receptor on ABp and ABa. Probably acts as a signal, from the secondary vulval epithelial cells and the vulval muscle type 1 (vm1) cells, to activate the lin-12/Notch pathway in type 2 vulval muscle (vm2) cells, contributing to formation of the postsynaptic muscle plasma membrane extensions, known as muscle arms. Required for oocyte growth control, acting redundantly with lag-2, perhaps signaling via the glp-1/Notch pathway. Plays a somatic role in ovulation during adulthood, perhaps via lin-12/Notch signaling. Involved in establishing left-right asymmetry during intestinal organogenesis. The protein is Anterior pharynx in excess protein 1 (apx-1) of Caenorhabditis elegans.